An 865-amino-acid chain; its full sequence is Taste receptor type 1 member 3 (865 aa).

Positions 1-24 (MPGLALLGLTALLGLTALLDHGEG) are cleaved as a signal peptide. The Extracellular portion of the chain corresponds to 25-573 (ATSCLSQQLR…FLAWGEPAVL (549 aa)). N-linked (GlcNAc...) asparagine glycosylation is found at asparagine 134 and asparagine 267. The helical transmembrane segment at 574-594 (LLLALLALALGLALAALGLFL) threads the bilayer. At 595-606 (WHSDSPLVQASG) the chain is on the cytoplasmic side. A helical transmembrane segment spans residues 607–627 (GPRACFGLACLGLVCLSVLLF). Residues 628–642 (PGQPGPASCLAQQPL) are Extracellular-facing. Residues 643–663 (FHLPLTGCLSTFFLQAAEIFV) traverse the membrane as a helical segment. At 664 to 685 (GSELPPSWAEKMRGRLRGPWAW) the chain is on the cytoplasmic side. Residues 686–706 (LVVLLAMLAEAALCAWYLVAF) form a helical membrane-spanning segment. At 707 to 732 (PPEVVTDWRVLPTEALVHCHVHSWIS) the chain is on the extracellular side. Residues 733-753 (FGLVHATNAMLAFLCFLGTFL) traverse the membrane as a helical segment. Residues 754 to 765 (VQSRPGRYNGAR) are Cytoplasmic-facing. The helical transmembrane segment at 766–786 (GLTFAMLAYFITWISFVPLFA) threads the bilayer. The Extracellular portion of the chain corresponds to 787–794 (NVHVAYQP). A helical transmembrane segment spans residues 795-815 (AVQMGTILLCALGILATFHLP). Over 816–865 (KCYLLLQRPELNTPEFFLEDNARAQGSSWGQGRGESGQKQVTPDPVTSPQ) the chain is Cytoplasmic. The tract at residues 840 to 865 (QGSSWGQGRGESGQKQVTPDPVTSPQ) is disordered. Positions 852–865 (GQKQVTPDPVTSPQ) are enriched in polar residues.

It belongs to the G-protein coupled receptor 3 family. TAS1R subfamily. In terms of assembly, forms homodimers or a heterodimer with TAS1R1. Expressed in taste buds.

Its subcellular location is the cell membrane. In terms of biological role, putative taste receptor. TAS1R1/TAS1R3 responds to the umami taste stimulus (the taste of monosodium glutamate). The chain is Taste receptor type 1 member 3 (TAS1R3) from Felis catus (Cat).